Reading from the N-terminus, the 434-residue chain is Enolase (434 aa).

Gln165 contributes to the (2R)-2-phosphoglycerate binding site. Glu207 functions as the Proton donor in the catalytic mechanism. 3 residues coordinate Mg(2+): Asp244, Glu291, and Asp318. The (2R)-2-phosphoglycerate site is built by Lys343, Arg372, Ser373, and Lys394. The Proton acceptor role is filled by Lys343.

It belongs to the enolase family. Requires Mg(2+) as cofactor.

It localises to the cytoplasm. The protein localises to the secreted. It is found in the cell surface. It catalyses the reaction (2R)-2-phosphoglycerate = phosphoenolpyruvate + H2O. It participates in carbohydrate degradation; glycolysis; pyruvate from D-glyceraldehyde 3-phosphate: step 4/5. Catalyzes the reversible conversion of 2-phosphoglycerate (2-PG) into phosphoenolpyruvate (PEP). It is essential for the degradation of carbohydrates via glycolysis. The polypeptide is Enolase (Staphylococcus saprophyticus subsp. saprophyticus (strain ATCC 15305 / DSM 20229 / NCIMB 8711 / NCTC 7292 / S-41)).